A 360-amino-acid polypeptide reads, in one-letter code: MAAERGAGQQQSQEMMEVDRRVESEESGDEEGKKHSSGIVADLSEQSLKDGEERGEEDPEEEHELPVDMETINLDRDAEDVDLNHYRIGKIEGFEVLKKVKTLCLRQNLIKCIENLEELQSLRELDLYDNQIKKIENLEALTELEILDISFNLLRNIEGVDKLTRLKKLFLVNNKISKIENLSNLHQLQMLELGSNRIRAIENIDTLTNLESLFLGKNKITKLQNLDALTNLTVLSMQSNRLTKIEGLQNLVNLRELYLSHNGIEVIEGLENNNKLTMLDIASNRIKKIENISHLTELQEFWMNDNLLESWSDLDELKGARSLETVYLERNPLQKDPQYRRKVMLALPSVRQIDATFVRF.

The disordered stretch occupies residues 1-64 (MAAERGAGQQ…GEEDPEEEHE (64 aa)). Ala2 carries the N-acetylalanine modification. Ser12, Ser24, Ser27, Ser44, and Ser47 each carry phosphoserine. Over residues 17–34 (EVDRRVESEESGDEEGKK) the composition is skewed to basic and acidic residues. Residues 53–63 (ERGEEDPEEEH) are compositionally biased toward acidic residues. LRR repeat units follow at residues 77–98 (DAED…EVLK), 99–120 (KVKT…EELQ), 121–142 (SLRE…EALT), 143–164 (ELEI…DKLT), 165–186 (RLKK…SNLH), 187–208 (QLQM…DTLT), 209–230 (NLES…DALT), 231–252 (NLTV…QNLV), 253–274 (NLRE…ENNN), 275–296 (KLTM…SHLT), and 297–318 (ELQE…DELK). Ser322 is subject to Phosphoserine. Residues 331 to 360 (NPLQKDPQYRRKVMLALPSVRQIDATFVRF) enclose the LRRCT domain.

The protein belongs to the SDS22 family. In terms of assembly, interacts with PPP1CA, PPP1CB and PPP1CC/PPP1G isoform 1. Widely expressed.

It localises to the nucleus. Functionally, regulatory subunit of protein phosphatase 1. The polypeptide is Protein phosphatase 1 regulatory subunit 7 (PPP1R7) (Homo sapiens (Human)).